A 73-amino-acid chain; its full sequence is Translation initiation factor IF-1 (73 aa).

The 73-residue stretch at 1 to 73 (MAKKQGAIEI…TRGRIVYRYK (73 aa)) folds into the S1-like domain.

The protein belongs to the IF-1 family. Component of the 30S ribosomal translation pre-initiation complex which assembles on the 30S ribosome in the order IF-2 and IF-3, IF-1 and N-formylmethionyl-tRNA(fMet); mRNA recruitment can occur at any time during PIC assembly.

It localises to the cytoplasm. In terms of biological role, one of the essential components for the initiation of protein synthesis. Stabilizes the binding of IF-2 and IF-3 on the 30S subunit to which N-formylmethionyl-tRNA(fMet) subsequently binds. Helps modulate mRNA selection, yielding the 30S pre-initiation complex (PIC). Upon addition of the 50S ribosomal subunit IF-1, IF-2 and IF-3 are released leaving the mature 70S translation initiation complex. The polypeptide is Translation initiation factor IF-1 (Streptomyces coelicolor (strain ATCC BAA-471 / A3(2) / M145)).